A 465-amino-acid polypeptide reads, in one-letter code: Glutamate--tRNA ligase (465 aa).

Positions 11 to 21 match the 'HIGH' region motif; that stretch reads PSPTGFIHLGN. The disordered stretch occupies residues 118 to 139; that stretch reads GEKPRYDGTWRPAPGKILPPPP. The 'KMSKS' region signature appears at 243-247; that stretch reads KMSKR. Position 246 (Lys-246) interacts with ATP.

Belongs to the class-I aminoacyl-tRNA synthetase family. Glutamate--tRNA ligase type 1 subfamily. As to quaternary structure, monomer.

It is found in the cytoplasm. It catalyses the reaction tRNA(Glu) + L-glutamate + ATP = L-glutamyl-tRNA(Glu) + AMP + diphosphate. Catalyzes the attachment of glutamate to tRNA(Glu) in a two-step reaction: glutamate is first activated by ATP to form Glu-AMP and then transferred to the acceptor end of tRNA(Glu). This Ralstonia pickettii (strain 12J) protein is Glutamate--tRNA ligase.